A 45-amino-acid chain; its full sequence is Large ribosomal subunit protein bL34 (45 aa).

Belongs to the bacterial ribosomal protein bL34 family.

In Prochlorococcus marinus (strain MIT 9313), this protein is Large ribosomal subunit protein bL34.